Reading from the N-terminus, the 217-residue chain is Probable transaldolase (217 aa).

The active-site Schiff-base intermediate with substrate is the Lys-83.

The protein belongs to the transaldolase family. Type 3B subfamily.

Its subcellular location is the cytoplasm. The catalysed reaction is D-sedoheptulose 7-phosphate + D-glyceraldehyde 3-phosphate = D-erythrose 4-phosphate + beta-D-fructose 6-phosphate. It functions in the pathway carbohydrate degradation; pentose phosphate pathway; D-glyceraldehyde 3-phosphate and beta-D-fructose 6-phosphate from D-ribose 5-phosphate and D-xylulose 5-phosphate (non-oxidative stage): step 2/3. Transaldolase is important for the balance of metabolites in the pentose-phosphate pathway. The protein is Probable transaldolase of Clostridium botulinum (strain Loch Maree / Type A3).